Reading from the N-terminus, the 169-residue chain is DNA damage-inducible transcript 3 protein (169 aa).

The interaction with TRIB3 stretch occupies residues 10–18 (FGTLSSWEL). Positions 10 to 26 (FGTLSSWELEAWYEDLQ) are N-terminal. Phosphoserine; by CK2 is present on residues serine 14, serine 15, serine 30, and serine 31. The disordered stretch occupies residues 32–139 (DENGGTYVSP…KVAQLAEENE (108 aa)). Positions 74–89 (TSTSQSPHSPDSSQSS) are enriched in low complexity. Serine 79 and serine 82 each carry phosphoserine; by MAPK14. Residues 99 to 162 (QGRTRKRKQS…EATRRALIDR (64 aa)) enclose the bZIP domain. Residues 101 to 130 (RTRKRKQSGHSPARAGKQRMKEKEQENERK) are basic motif. Residues 119-139 (RMKEKEQENERKVAQLAEENE) show a composition bias toward basic and acidic residues. The interval 134–148 (LAEENERLKQEIERL) is leucine-zipper.

This sequence belongs to the bZIP family. As to quaternary structure, heterodimer. Interacts with TCF7L2/TCF4, EP300/P300, HDAC1, HDAC5 and HDAC6. Interacts with TRIB3 which blocks its association with EP300/P300. Interacts with FOXO3, CEBPB and ATF4. Interacts with isoform AltDDIT3 of DDIT3. Post-translationally, ubiquitinated, leading to its degradation by the proteasome. In terms of processing, phosphorylation at serine residues by MAPK14 enhances its transcriptional activation activity while phosphorylation at serine residues by CK2 inhibits its transcriptional activation activity.

Its subcellular location is the cytoplasm. It is found in the nucleus. In terms of biological role, multifunctional transcription factor in endoplasmic reticulum (ER) stress response. Plays an essential role in the response to a wide variety of cell stresses and induces cell cycle arrest and apoptosis in response to ER stress. Plays a dual role both as an inhibitor of CCAAT/enhancer-binding protein (C/EBP) function and as an activator of other genes. Acts as a dominant-negative regulator of C/EBP-induced transcription: dimerizes with members of the C/EBP family, impairs their association with C/EBP binding sites in the promoter regions, and inhibits the expression of C/EBP regulated genes. Positively regulates the transcription of TRIB3, IL6, IL8, IL23, TNFRSF10B/DR5, PPP1R15A/GADD34, BBC3/PUMA, BCL2L11/BIM and ERO1L. Negatively regulates; expression of BCL2 and MYOD1, ATF4-dependent transcriptional activation of asparagine synthetase (ASNS), CEBPA-dependent transcriptional activation of hepcidin (HAMP) and CEBPB-mediated expression of peroxisome proliferator-activated receptor gamma (PPARG). Together with ATF4, mediates ER-mediated cell death by promoting expression of genes involved in cellular amino acid metabolic processes, mRNA translation and the unfolded protein response (UPR) in response to ER stress. Inhibits the canonical Wnt signaling pathway by binding to TCF7L2/TCF4, impairing its DNA-binding properties and repressing its transcriptional activity. Plays a regulatory role in the inflammatory response through the induction of caspase-11 (CASP4/CASP11) which induces the activation of caspase-1 (CASP1) and both these caspases increase the activation of pro-IL1B to mature IL1B which is involved in the inflammatory response. Acts as a major regulator of postnatal neovascularization through regulation of endothelial nitric oxide synthase (NOS3)-related signaling. The chain is DNA damage-inducible transcript 3 protein (DDIT3) from Homo sapiens (Human).